A 191-amino-acid chain; its full sequence is Ribonuclease HII (191 aa).

Positions 7–191 constitute an RNase H type-2 domain; the sequence is ILMAGVDEVG…YSPVADLISK (185 aa). A divalent metal cation contacts are provided by D13, E14, and D103.

This sequence belongs to the RNase HII family. Mn(2+) serves as cofactor. The cofactor is Mg(2+).

It is found in the cytoplasm. The enzyme catalyses Endonucleolytic cleavage to 5'-phosphomonoester.. In terms of biological role, endonuclease that specifically degrades the RNA of RNA-DNA hybrids. The chain is Ribonuclease HII from Legionella pneumophila (strain Paris).